Here is a 209-residue protein sequence, read N- to C-terminus: Claudin-like protein ZF-A9 (209 aa).

Transmembrane regions (helical) follow at residues 8–28 (LGTTLGTLGWLGIIISCAIPL), 81–101 (AILVISAIVGLIAMFASFAGG), 114–134 (ALVATTGGVAFIIAGILGLVP), and 159–179 (FGAAIFICWGAAVLLVIGGGL). The tract at residues 187 to 209 (GRTSSRGRYTPASQNGRERSEYV) is disordered. Residues 188 to 201 (RTSSRGRYTPASQN) show a composition bias toward polar residues.

Belongs to the claudin family.

It is found in the cell membrane. The protein resides in the cell junction. The protein localises to the tight junction. Functionally, component of tight junction (TJ) strands. The sequence is that of Claudin-like protein ZF-A9 (cldng) from Danio rerio (Zebrafish).